Reading from the N-terminus, the 649-residue chain is tRNA-guanine(15) transglycosylase (649 aa).

Catalysis depends on Asp-88, which acts as the Nucleophile. Positions 123 and 194 each coordinate substrate. Positions 280, 282, and 285 each coordinate Zn(2+). One can recognise a PUA domain in the interval 573-648 (KYRIVIDSSV…VAATLRGGLK (76 aa)).

Belongs to the archaeosine tRNA-ribosyltransferase family. Zn(2+) is required as a cofactor.

It carries out the reaction guanosine(15) in tRNA + 7-cyano-7-deazaguanine = 7-cyano-7-carbaguanosine(15) in tRNA + guanine. It participates in tRNA modification; archaeosine-tRNA biosynthesis. Functionally, exchanges the guanine residue with 7-cyano-7-deazaguanine (preQ0) at position 15 in the dihydrouridine loop (D-loop) of archaeal tRNAs. In Methanococcus maripaludis (strain DSM 14266 / JCM 13030 / NBRC 101832 / S2 / LL), this protein is tRNA-guanine(15) transglycosylase.